Here is a 183-residue protein sequence, read N- to C-terminus: Hypoxanthine/guanine phosphoribosyltransferase (183 aa).

Belongs to the purine/pyrimidine phosphoribosyltransferase family. Archaeal HPRT subfamily. In terms of assembly, homodimer.

It is found in the cytoplasm. It catalyses the reaction IMP + diphosphate = hypoxanthine + 5-phospho-alpha-D-ribose 1-diphosphate. It carries out the reaction GMP + diphosphate = guanine + 5-phospho-alpha-D-ribose 1-diphosphate. The protein operates within purine metabolism; IMP biosynthesis via salvage pathway; IMP from hypoxanthine: step 1/1. In terms of biological role, catalyzes a salvage reaction resulting in the formation of IMP that is energically less costly than de novo synthesis. This is Hypoxanthine/guanine phosphoribosyltransferase from Methanocaldococcus vulcanius (strain ATCC 700851 / DSM 12094 / M7) (Methanococcus vulcanius).